We begin with the raw amino-acid sequence, 59 residues long: Embryonic testis differentiation protein homolog A (59 aa).

The segment covering 1–10 (MDKEVPKGSP) has biased composition (basic and acidic residues). The segment at 1-25 (MDKEVPKGSPREPALNIKKSDKSFK) is disordered.

The sequence is that of Embryonic testis differentiation protein homolog A from Homo sapiens (Human).